The sequence spans 357 residues: Membrane-bound lytic murein transglycosylase C (357 aa).

The first 17 residues, 1 to 17 (MKLKKFLVLLLIPFLYA), serve as a signal peptide directing secretion. The N-palmitoyl cysteine moiety is linked to residue cysteine 18. Residue cysteine 18 is the site of S-diacylglycerol cysteine attachment.

It belongs to the transglycosylase Slt family.

The protein localises to the cell outer membrane. It carries out the reaction Exolytic cleavage of the (1-&gt;4)-beta-glycosidic linkage between N-acetylmuramic acid (MurNAc) and N-acetylglucosamine (GlcNAc) residues in peptidoglycan, from either the reducing or the non-reducing ends of the peptidoglycan chains, with concomitant formation of a 1,6-anhydrobond in the MurNAc residue.. Functionally, murein-degrading enzyme. May play a role in recycling of muropeptides during cell elongation and/or cell division. In Mannheimia succiniciproducens (strain KCTC 0769BP / MBEL55E), this protein is Membrane-bound lytic murein transglycosylase C.